The sequence spans 111 residues: Small ribosomal subunit protein bS6 (111 aa).

Belongs to the bacterial ribosomal protein bS6 family.

Functionally, binds together with bS18 to 16S ribosomal RNA. The sequence is that of Small ribosomal subunit protein bS6 from Francisella tularensis subsp. tularensis (strain FSC 198).